The sequence spans 479 residues: Ribosomal RNA small subunit methyltransferase F (479 aa).

Residues 125–131, Glu149, Asp176, and Asp194 each bind S-adenosyl-L-methionine; that span reads AAAPGSK. Cys247 acts as the Nucleophile in catalysis.

Belongs to the class I-like SAM-binding methyltransferase superfamily. RsmB/NOP family.

It is found in the cytoplasm. The enzyme catalyses cytidine(1407) in 16S rRNA + S-adenosyl-L-methionine = 5-methylcytidine(1407) in 16S rRNA + S-adenosyl-L-homocysteine + H(+). In terms of biological role, specifically methylates the cytosine at position 1407 (m5C1407) of 16S rRNA. The chain is Ribosomal RNA small subunit methyltransferase F from Salmonella paratyphi C (strain RKS4594).